A 310-amino-acid chain; its full sequence is Nuclear hormone receptor family member nhr-89 (310 aa).

Residues 5–79 (EGPCRVCHSV…SGMRRDCVRK (75 aa)) constitute a DNA-binding region (nuclear receptor). 2 consecutive NR C4-type zinc fingers follow at residues 8 to 29 (CRVCHSVKGTRRHFGITACMSC) and 43 to 67 (CPANNSCTILDDQKQFCRSCRYNKC). One can recognise an NR LBD domain in the interval 101-310 (KLSESYEELL…TLHQKYQIPF (210 aa)).

Belongs to the nuclear hormone receptor family.

It is found in the nucleus. Orphan nuclear receptor. This chain is Nuclear hormone receptor family member nhr-89 (nhr-89), found in Caenorhabditis elegans.